Consider the following 944-residue polypeptide: 2-oxoglutarate dehydrogenase E1 component (944 aa).

Residues 918-944 (SSTAEGDPTVHKKEQERIVSDSLTRKN) are disordered. Basic and acidic residues predominate over residues 925 to 936 (PTVHKKEQERIV).

Belongs to the alpha-ketoglutarate dehydrogenase family. As to quaternary structure, homodimer. Part of the 2-oxoglutarate dehydrogenase (OGDH) complex composed of E1 (2-oxoglutarate dehydrogenase), E2 (dihydrolipoamide succinyltransferase) and E3 (dihydrolipoamide dehydrogenase); the complex contains multiple copies of the three enzymatic components (E1, E2 and E3). It depends on thiamine diphosphate as a cofactor.

The enzyme catalyses N(6)-[(R)-lipoyl]-L-lysyl-[protein] + 2-oxoglutarate + H(+) = N(6)-[(R)-S(8)-succinyldihydrolipoyl]-L-lysyl-[protein] + CO2. Its function is as follows. E1 component of the 2-oxoglutarate dehydrogenase (OGDH) complex which catalyzes the decarboxylation of 2-oxoglutarate, the first step in the conversion of 2-oxoglutarate to succinyl-CoA and CO(2). This chain is 2-oxoglutarate dehydrogenase E1 component, found in Bacillus pumilus (strain SAFR-032).